A 483-amino-acid polypeptide reads, in one-letter code: Islet cell autoantigen 1 (483 aa).

Positions 51-254 (ASDADLDAKL…TSHTMAAIHE (204 aa)) constitute an AH domain. Residues 281–321 (EEKKKINQQESTDAAVQEPSQLISLEEENQRKESSSFKTED) form a disordered region. The span at 288 to 303 (QQESTDAAVQEPSQLI) shows a compositional bias: polar residues. Residues 308 to 321 (ENQRKESSSFKTED) show a composition bias toward basic and acidic residues.

Expressed abundantly in pancreas, heart and brain with low levels of expression in lung, kidney, liver and thyroid.

The protein resides in the cytoplasm. Its subcellular location is the cytosol. It localises to the golgi apparatus membrane. It is found in the cytoplasmic vesicle. The protein localises to the secretory vesicle membrane. The protein resides in the secretory vesicle. Its subcellular location is the synaptic vesicle membrane. Its function is as follows. May play a role in neurotransmitter secretion. This chain is Islet cell autoantigen 1 (ICA1), found in Homo sapiens (Human).